The primary structure comprises 400 residues: Putative lysosomal acid lipase/cholesteryl ester hydrolase (400 aa).

The signal sequence occupies residues 1-17 (MWRLIIIAILFQGLVNS). Residues Asn-34, Asn-129, and Asn-159 are each glycosylated (N-linked (GlcNAc...) asparagine). The region spanning 78–378 (PAVFLQHGLL…EWEHLDFIWG (301 aa)) is the AB hydrolase-1 domain. Catalysis depends on Ser-172, which acts as the Charge relay system. The N-linked (GlcNAc...) asparagine glycan is linked to Asn-271. His-372 functions as the Charge relay system in the catalytic mechanism.

It belongs to the AB hydrolase superfamily. Lipase family. Expressed by the venom gland.

The protein resides in the secreted. The enzyme catalyses a sterol ester + H2O = a sterol + a fatty acid + H(+). Its function is as follows. In physiological conditions, is crucial for intracellular hydrolysis of cholesteryl esters and triglycerides that have been internalized via receptor-mediated endocytosis of lipoprotein particles. In venom, the biological contribution is unknown. The sequence is that of Putative lysosomal acid lipase/cholesteryl ester hydrolase from Crotalus adamanteus (Eastern diamondback rattlesnake).